A 577-amino-acid chain; its full sequence is Arginine--tRNA ligase (577 aa).

The 'HIGH' region motif lies at 122–132; it reads PNVAKEMHVGH.

Belongs to the class-I aminoacyl-tRNA synthetase family. As to quaternary structure, monomer.

It localises to the cytoplasm. The catalysed reaction is tRNA(Arg) + L-arginine + ATP = L-arginyl-tRNA(Arg) + AMP + diphosphate. In Histophilus somni (strain 2336) (Haemophilus somnus), this protein is Arginine--tRNA ligase.